Here is a 272-residue protein sequence, read N- to C-terminus: Ribonuclease HII (272 aa).

Residues 87–272 (KYVAGVDEVG…HRMSFLKNIL (186 aa)) form the RNase H type-2 domain. Asp-93, Glu-94, and Asp-188 together coordinate a divalent metal cation.

Belongs to the RNase HII family. It depends on Mn(2+) as a cofactor. Mg(2+) is required as a cofactor.

It localises to the cytoplasm. The catalysed reaction is Endonucleolytic cleavage to 5'-phosphomonoester.. In terms of biological role, endonuclease that specifically degrades the RNA of RNA-DNA hybrids. In Clostridium perfringens (strain ATCC 13124 / DSM 756 / JCM 1290 / NCIMB 6125 / NCTC 8237 / Type A), this protein is Ribonuclease HII.